The primary structure comprises 191 residues: UPF0149 protein VS_2635 (191 aa).

Belongs to the UPF0149 family.

This chain is UPF0149 protein VS_2635, found in Vibrio atlanticus (strain LGP32) (Vibrio splendidus (strain Mel32)).